The primary structure comprises 815 residues: Translation initiation factor IF-2 (815 aa).

The 168-residue stretch at A315 to E482 folds into the tr-type G domain. Positions G324–T331 are G1. G324–T331 serves as a coordination point for GTP. The tract at residues G349 to H353 is G2. Residues D370–G373 form a G3 region. Residues D370 to H374 and N424 to D427 each bind GTP. A G4 region spans residues N424–D427. Residues S460 to Y462 are G5.

The protein belongs to the TRAFAC class translation factor GTPase superfamily. Classic translation factor GTPase family. IF-2 subfamily.

It is found in the cytoplasm. In terms of biological role, one of the essential components for the initiation of protein synthesis. Protects formylmethionyl-tRNA from spontaneous hydrolysis and promotes its binding to the 30S ribosomal subunits. Also involved in the hydrolysis of GTP during the formation of the 70S ribosomal complex. In Ruthia magnifica subsp. Calyptogena magnifica, this protein is Translation initiation factor IF-2.